The chain runs to 200 residues: WASH complex subunit 3 (200 aa).

Residues 56 to 76 (SLRIQQIETTLSILEAKLASI) are a coiled coil. 2 disordered regions span residues 87 to 130 (VRAP…AENI) and 165 to 200 (DPNL…SFSD).

Belongs to the CCDC53 family. As to quaternary structure, component of the WASH complex.

The sequence is that of WASH complex subunit 3 from Danio rerio (Zebrafish).